Reading from the N-terminus, the 374-residue chain is 4-galactosyl-N-acetylglucosaminide 3-alpha-L-fucosyltransferase FUT5 (374 aa).

Topologically, residues 1–15 (MDPLGPAKPQWLWRR) are cytoplasmic. The chain crosses the membrane as a helical; Signal-anchor for type II membrane protein span at residues 16–34 (CLAGLLFQLLVAVCFFSYL). The Lumenal segment spans residues 35-374 (RVSRDDATGS…TVRSIAAWFT (340 aa)). N60, N105, N167, and N198 each carry an N-linked (GlcNAc...) asparagine glycan.

It belongs to the glycosyltransferase 10 family. As to expression, liver, colon and testis and trace amounts in T-cells and brain.

It is found in the golgi apparatus. The protein localises to the golgi stack membrane. It carries out the reaction a beta-D-galactosyl-(1-&gt;3)-N-acetyl-beta-D-glucosaminyl derivative + GDP-beta-L-fucose = a beta-D-galactosyl-(1-&gt;3)-[alpha-L-fucosyl-(1-&gt;4)]-N-acetyl-beta-D-glucosaminyl derivative + GDP + H(+). The catalysed reaction is an N-acetyl-alpha-neuraminyl-(2-&gt;3)-beta-D-galactosyl-(1-&gt;4)-N-acetyl-beta-D-glucosaminyl derivative + GDP-beta-L-fucose = an alpha-Neu5Ac-(2-&gt;3)-beta-D-Gal-(1-&gt;4)-[alpha-L-Fuc-(1-&gt;3)]-beta-D-GlcNAc derivative + GDP + H(+). It catalyses the reaction an alpha-Neu5Ac-(2-&gt;3)-beta-D-Gal-(1-&gt;4)-beta-D-GlcNAc-(1-&gt;3)-beta-D-Gal-(1-&gt;4)-[alpha-L-Fuc-(1-&gt;3)]-beta-D-GlcNAc derivative + GDP-beta-L-fucose = an alpha-Neu5Ac-(2-&gt;3)-beta-D-Gal-(1-&gt;4)-[alpha-L-Fuc-(1-&gt;3)]-beta-D-GlcNAc-(1-&gt;3)-beta-D-Gal-(1-&gt;4)-[alpha-L-Fuc-(1-&gt;3)]-beta-D-GlcNAc derivative + GDP + H(+). The enzyme catalyses a beta-D-galactosyl-(1-&gt;4)-N-acetyl-beta-D-glucosaminyl derivative + GDP-beta-L-fucose = a beta-D-galactosyl-(1-&gt;4)-[alpha-L-fucosyl-(1-&gt;3)]-N-acetyl-beta-D-glucosaminyl derivative + GDP + H(+). It carries out the reaction a neolactoside nLc4Cer + GDP-beta-L-fucose = a neolactoside III(3)-alpha-Fuc-nLc4Cer + GDP + H(+). The catalysed reaction is a neolactoside nLc6Cer + GDP-beta-L-fucose = beta-D-galactosyl-(1-&gt;4)-N-acetyl-beta-D-glucosaminyl-(1-&gt;3)-beta-D-galactosyl-(1-&gt;4)-[alpha-L-fucosyl-(1-&gt;3)]-N-acetyl-beta-D-glucosaminyl-(1-&gt;3)-beta-D-galactosyl-(1-&gt;4)-beta-D-glucosyl-(1&lt;-&gt;1')-ceramide + GDP + H(+). It catalyses the reaction a neolactoside nLc6Cer(d18:1(4E)) + GDP-beta-L-fucose = a neolactoside III(3)-alpha-Fuc-nLc6Cer(d18:1(4E)) + GDP + H(+). The enzyme catalyses a neolactoside nLc4Cer(d18:1(4E)) + GDP-beta-L-fucose = a neolactoside III(3)-alpha-Fuc-nLc4Cer(d18:1(4E)) + GDP + H(+). It carries out the reaction a neolactoside VI(3)-alpha-NeuNAc-nLc6Cer + GDP-beta-L-fucose = a neolactoside VI(3)-alpha-NeuAc,III(3)-alphaFuc-nLc6Cer + GDP + H(+). The catalysed reaction is beta-D-galactosyl-(1-&gt;4)-N-acetyl-D-glucosamine + GDP-beta-L-fucose = beta-D-galactosyl-(1-&gt;4)-[alpha-L-fucosyl-(1-&gt;3)]-N-acetyl-D-glucosamine + GDP + H(+). It catalyses the reaction N-acetyl-alpha-neuraminosyl-(2-&gt;3)-beta-D-galactosyl-(1-&gt;4)-N-acetyl-beta-D-glucosamine + GDP-beta-L-fucose = N-acetyl-alpha-neuraminosyl-(2-&gt;3)-beta-D-galactosyl-(1-&gt;4)-[alpha-L-fucosyl-(1-&gt;3)]-N-acetyl-beta-D-glucosamine + GDP + H(+). The enzyme catalyses alpha-L-Fuc-(1-&gt;2)-beta-D-Gal-(1-&gt;4)-D-GlcNAc + GDP-beta-L-fucose = alpha-L-Fuc-(1-&gt;2)-beta-D-Gal-(1-&gt;4)-[alpha-L-Fuc-(1-&gt;3)]-D-GlcNAc + GDP + H(+). It carries out the reaction an alpha-Neu5Ac-(2-&gt;3)-beta-D-Gal-(1-&gt;3)-D-GlcNAc derivative + GDP-beta-L-fucose = an alpha-Neu5Ac-(2-&gt;3)-beta-D-Gal-(1-&gt;3)-[alpha-L-Fuc-(1-&gt;4)]-beta-D-GlcNAc derivative + GDP + H(+). It functions in the pathway protein modification; protein glycosylation. Its function is as follows. Catalyzes preferentially the transfer of L-fucose, from a guanosine diphosphate-beta-L-fucose, to the N-acetyl-beta-D-glucosamine (GlcNAc) of an N-acetyllactosamine unit (type 2 chain) of an oligosaccharide, or a glycoprotein- and a glycolipid-linked N-acetyllactosamine unit via an alpha (1,3) linkage and participates in the surface expression of VIM-2, Lewis X/SSEA-1 and sialyl Lewis X antigens. Preferentially transfers fucose to the GlcNAc of an internal N-acetyllactosamine unit of a poly-N-acetyllactosamine chain acceptor substrate. Also catalyzes to a lesser extend the transfer of L-fucose to the GlcNAc of a type 1 (beta-D-galactosyl-(1-&gt;3)-N-acetyl-beta-D-glucosaminyl) or H-type 1 (alpha-L-Fuc-(1-&gt;2)-beta-D-Gal-(1-&gt;3)-D-GlcNAc) chain oligosaccharide via an alpha (1,4) linkage. Preferentially catalyzes sialylated type 2 oligosaccharide acceptors over neutral type 2 or H type 2 (alpha-L-Fuc-(1-&gt;2)-beta-D-Gal-(1-&gt;4)-D-GlcNAc) oligosaccharide acceptors. Lactose-based structures are also acceptor substrates. The sequence is that of 4-galactosyl-N-acetylglucosaminide 3-alpha-L-fucosyltransferase FUT5 from Homo sapiens (Human).